A 485-amino-acid chain; its full sequence is Inosine-5'-monophosphate dehydrogenase (485 aa).

CBS domains follow at residues 97-154 (IIRD…VSDV) and 155-211 (MVRD…PDAS). Residues D246 and 295 to 297 (GIG) each bind NAD(+). Residues G297 and G299 each contribute to the K(+) site. Residue S300 coordinates IMP. Residue C302 coordinates K(+). C302 acts as the Thioimidate intermediate in catalysis. Residues 335-337 (DGG), 358-359 (GS), and 382-386 (YRGMG) contribute to the IMP site. R398 (proton acceptor) is an active-site residue. E409 provides a ligand contact to IMP. E463, S464, and H465 together coordinate K(+).

It belongs to the IMPDH/GMPR family. In terms of assembly, homotetramer. The cofactor is K(+).

The catalysed reaction is IMP + NAD(+) + H2O = XMP + NADH + H(+). The protein operates within purine metabolism; XMP biosynthesis via de novo pathway; XMP from IMP: step 1/1. With respect to regulation, mycophenolic acid (MPA) is a non-competitive inhibitor that prevents formation of the closed enzyme conformation by binding to the same site as the amobile flap. In contrast, mizoribine monophosphate (MZP) is a competitive inhibitor that induces the closed conformation. MPA is a potent inhibitor of mammalian IMPDHs but a poor inhibitor of the bacterial enzymes. MZP is a more potent inhibitor of bacterial IMPDH. Catalyzes the conversion of inosine 5'-phosphate (IMP) to xanthosine 5'-phosphate (XMP), the first committed and rate-limiting step in the de novo synthesis of guanine nucleotides, and therefore plays an important role in the regulation of cell growth. In Thermoplasma acidophilum (strain ATCC 25905 / DSM 1728 / JCM 9062 / NBRC 15155 / AMRC-C165), this protein is Inosine-5'-monophosphate dehydrogenase.